The chain runs to 382 residues: Fimbrial usher domain-containing protein YdeT (382 aa).

The polypeptide is Fimbrial usher domain-containing protein YdeT (ydeT) (Escherichia coli O157:H7).